Consider the following 523-residue polypeptide: Heparanase (523 aa).

A signal peptide spans 1–18 (MLVLLLLVLLLAVPPRRT). Heparan sulfate group is bound by residues 42-44 (DAS), T77, and 137-141 (KKHKN). Residues N141 and N196 are each glycosylated (N-linked (GlcNAc...) asparagine). The Proton donor role is filled by E204. Residues 250-260 (QPRKHTQHLLR), H276, and R283 each bind heparan sulfate group. The required for heterodimerization with the heparanase 8 kDa subunit stretch occupies residues 268–397 (KAIDSVTWHH…LLYKRLVGTR (130 aa)). E323 (nucleophile) is an active-site residue. Heparan sulfate group-binding positions include 328-330 (YGG) and 369-371 (GSY). C417 and C522 are joined by a disulfide. N436 and N439 each carry an N-linked (GlcNAc...) asparagine glycan. Positions 507–523 (FSYGFYVIRNAKAIACI) are required for transferring proheparanase to the Golgi apparatus, secretion and subsequent enzyme activity and for enhancement of PKB/AKT1 phosphorylation.

The protein belongs to the glycosyl hydrolase 79 family. Heterodimer; the active enzyme is a heterodimer of the 60 kDa and 45 kDa proteolytic products. N-glycosylated. In terms of processing, proteolytically cleaved to produce a 60 kDa and a 45 kDa product.

It localises to the secreted. The enzyme catalyses endohydrolysis of (1-&gt;4)-beta-D-glycosidic bonds of heparan sulfate chains in heparan sulfate proteoglycan.. Its function is as follows. Endoglycosidase that cleaves heparan sulfate proteoglycans (HSPGs) into heparan sulfate side chains and core proteoglycans. Participates in extracellular matrix (ECM) degradation and remodeling. Selectively cleaves the linkage between a glucuronic acid unit and an N-sulfo glucosamine unit carrying either a 3-O-sulfo or a 6-O-sulfo group. Can also cleave the linkage between a glucuronic acid unit and an N-sulfo glucosamine unit carrying a 2-O-sulfo group, but not linkages between a glucuronic acid unit and a 2-O-sulfated iduronic acid moiety. Increases cell adhesion to the extracellular matrix (ECM), independent of its enzymatic activity. The chain is Heparanase (HPSE) from Gallus gallus (Chicken).